A 164-amino-acid chain; its full sequence is Dehydrin Rab16C (164 aa).

Positions 42 to 51 are enriched in gly residues; it reads MGGHHAGAGG. Positions 42 to 164 are disordered; that stretch reads MGGHHAGAGG…KIKEKLPGQH (123 aa). Over residues 105–115 the composition is skewed to low complexity; that stretch reads GNNQQQQQMMG. Positions 128–138 are enriched in gly residues; it reads GMTGAGTGTGV. The span at 147–164 shows a compositional bias: basic and acidic residues; sequence GEKKGFMDKIKEKLPGQH.

This sequence belongs to the plant dehydrin family.

This Oryza sativa subsp. japonica (Rice) protein is Dehydrin Rab16C (RAB16C).